Here is a 118-residue protein sequence, read N- to C-terminus: Small ribosomal subunit protein uS13 (118 aa).

The segment at leucine 95–lysine 118 is disordered.

Belongs to the universal ribosomal protein uS13 family. As to quaternary structure, part of the 30S ribosomal subunit. Forms a loose heterodimer with protein S19. Forms two bridges to the 50S subunit in the 70S ribosome.

Located at the top of the head of the 30S subunit, it contacts several helices of the 16S rRNA. In the 70S ribosome it contacts the 23S rRNA (bridge B1a) and protein L5 of the 50S subunit (bridge B1b), connecting the 2 subunits; these bridges are implicated in subunit movement. Contacts the tRNAs in the A and P-sites. This chain is Small ribosomal subunit protein uS13, found in Xylella fastidiosa (strain 9a5c).